The following is a 667-amino-acid chain: Mediator of RNA polymerase II transcription subunit 17 (667 aa).

Residues 172–197 (KRRALQEAVQVLDMAQKQRQRASSNL) adopt a coiled-coil conformation.

It belongs to the Mediator complex subunit 17 family. Component of the Mediator complex.

It localises to the nucleus. Functionally, component of the Mediator complex, a coactivator involved in regulated gene transcription of nearly all RNA polymerase II-dependent genes. Mediator functions as a bridge to convey information from gene-specific regulatory proteins to the basal RNA polymerase II transcription machinery. Mediator is recruited to promoters by direct interactions with regulatory proteins and serves as a scaffold for the assembly of a functional preinitiation complex with RNA polymerase II and the general transcription factors. This chain is Mediator of RNA polymerase II transcription subunit 17 (mdt-17), found in Caenorhabditis elegans.